The sequence spans 572 residues: Proline--tRNA ligase (572 aa).

The protein belongs to the class-II aminoacyl-tRNA synthetase family. ProS type 1 subfamily. In terms of assembly, homodimer.

It localises to the cytoplasm. The catalysed reaction is tRNA(Pro) + L-proline + ATP = L-prolyl-tRNA(Pro) + AMP + diphosphate. Catalyzes the attachment of proline to tRNA(Pro) in a two-step reaction: proline is first activated by ATP to form Pro-AMP and then transferred to the acceptor end of tRNA(Pro). As ProRS can inadvertently accommodate and process non-cognate amino acids such as alanine and cysteine, to avoid such errors it has two additional distinct editing activities against alanine. One activity is designated as 'pretransfer' editing and involves the tRNA(Pro)-independent hydrolysis of activated Ala-AMP. The other activity is designated 'posttransfer' editing and involves deacylation of mischarged Ala-tRNA(Pro). The misacylated Cys-tRNA(Pro) is not edited by ProRS. This Erwinia tasmaniensis (strain DSM 17950 / CFBP 7177 / CIP 109463 / NCPPB 4357 / Et1/99) protein is Proline--tRNA ligase.